A 232-amino-acid chain; its full sequence is 2-C-methyl-D-erythritol 4-phosphate cytidylyltransferase (232 aa).

Belongs to the IspD/TarI cytidylyltransferase family. IspD subfamily.

The catalysed reaction is 2-C-methyl-D-erythritol 4-phosphate + CTP + H(+) = 4-CDP-2-C-methyl-D-erythritol + diphosphate. The protein operates within isoprenoid biosynthesis; isopentenyl diphosphate biosynthesis via DXP pathway; isopentenyl diphosphate from 1-deoxy-D-xylulose 5-phosphate: step 2/6. In terms of biological role, catalyzes the formation of 4-diphosphocytidyl-2-C-methyl-D-erythritol from CTP and 2-C-methyl-D-erythritol 4-phosphate (MEP). The polypeptide is 2-C-methyl-D-erythritol 4-phosphate cytidylyltransferase (Deinococcus radiodurans (strain ATCC 13939 / DSM 20539 / JCM 16871 / CCUG 27074 / LMG 4051 / NBRC 15346 / NCIMB 9279 / VKM B-1422 / R1)).